The following is a 175-amino-acid chain: Shikimate kinase (175 aa).

Residue 12–19 (GGRASGKS) coordinates ATP.

This sequence belongs to the shikimate kinase family.

The protein resides in the cytoplasm. The catalysed reaction is shikimate + ATP = 3-phosphoshikimate + ADP + H(+). The protein operates within metabolic intermediate biosynthesis; chorismate biosynthesis; chorismate from D-erythrose 4-phosphate and phosphoenolpyruvate: step 5/7. The polypeptide is Shikimate kinase (Nitratidesulfovibrio vulgaris (strain ATCC 29579 / DSM 644 / CCUG 34227 / NCIMB 8303 / VKM B-1760 / Hildenborough) (Desulfovibrio vulgaris)).